The following is a 133-amino-acid chain: UPF0292 protein TON_0187 (133 aa).

A Toprim domain is found at 20–100 (EGAIIVEGPR…RVDSETRKEL (81 aa)). Glutamate 26, aspartate 69, and aspartate 71 together coordinate Mg(2+).

Belongs to the UPF0292 family. Requires Mg(2+) as cofactor.

This is UPF0292 protein TON_0187 from Thermococcus onnurineus (strain NA1).